The sequence spans 289 residues: uncharacterized protein (289 aa).

9 helical membrane-spanning segments follow: residues 4-24 (NLLAVLFALASALTIAWGTVV), 44-64 (LNALMTPMWWAGMSTAMLAYF), 68-88 (VALGFGTLLVVQPVLVLSLMF), 106-126 (IFWATLLTVAVGIMIVLGRPL), 138-158 (IPVLLVGVAVMGGMWLLAEYV), 166-186 (ILGLVTGALFGYVAVMSKAAV), 196-216 (GLILNWEGYGLILTALLGTIV), 230-250 (LPAMTIAEPIVAFSLGYLVLG), and 258-278 (WEWIAMGIALLVMIVSTIALS).

It localises to the cell membrane. This is an uncharacterized protein from Corynebacterium glutamicum (strain ATCC 13032 / DSM 20300 / JCM 1318 / BCRC 11384 / CCUG 27702 / LMG 3730 / NBRC 12168 / NCIMB 10025 / NRRL B-2784 / 534).